Reading from the N-terminus, the 316-residue chain is MKALRIVFMGTPEFAVGILDAIAKQNKHEIVGVITAADKPAGRGQKIKYSAVKEYALKKELTLLQPTNLKDESFLLALKSLNANLHIVVAFRMLPKVVWAMPELGTFNLHASLLPNYRGAAPINWAIINGETKTGVTTFFIDDKIDTGAMILSKELEISESENLGDLHDKLMVLGCDAVLETLDKIAHGNVVTTIQEDTSDIKTAYKLDRDNCKIDFTKNITEVYNLIRGLSPYPSAWCNFRDADQEFSIKIYDTKQEVLLHDYTIGSVITTKKEIKIAVLGGFIQVLSLQFPGKKKMMAHELLNGLTFSEFAMVF.

(6S)-5,6,7,8-tetrahydrofolate is bound at residue 112-115 (SLLP).

This sequence belongs to the Fmt family.

The catalysed reaction is L-methionyl-tRNA(fMet) + (6R)-10-formyltetrahydrofolate = N-formyl-L-methionyl-tRNA(fMet) + (6S)-5,6,7,8-tetrahydrofolate + H(+). Attaches a formyl group to the free amino group of methionyl-tRNA(fMet). The formyl group appears to play a dual role in the initiator identity of N-formylmethionyl-tRNA by promoting its recognition by IF2 and preventing the misappropriation of this tRNA by the elongation apparatus. The polypeptide is Methionyl-tRNA formyltransferase (Flavobacterium psychrophilum (strain ATCC 49511 / DSM 21280 / CIP 103535 / JIP02/86)).